Consider the following 327-residue polypeptide: Pyruvate dehydrogenase E1 component subunit beta (327 aa).

Thiamine diphosphate is bound at residue E63.

Heterodimer of an alpha and a beta chain. It depends on thiamine diphosphate as a cofactor.

The enzyme catalyses N(6)-[(R)-lipoyl]-L-lysyl-[protein] + pyruvate + H(+) = N(6)-[(R)-S(8)-acetyldihydrolipoyl]-L-lysyl-[protein] + CO2. The pyruvate dehydrogenase complex catalyzes the overall conversion of pyruvate to acetyl-CoA and CO(2). It contains multiple copies of three enzymatic components: pyruvate dehydrogenase (E1), dihydrolipoamide acetyltransferase (E2) and lipoamide dehydrogenase (E3). In Mycoplasma pneumoniae (strain ATCC 29342 / M129 / Subtype 1) (Mycoplasmoides pneumoniae), this protein is Pyruvate dehydrogenase E1 component subunit beta (pdhB).